The sequence spans 299 residues: Small ribosomal subunit biogenesis GTPase RsgA (299 aa).

The region spanning 64-225 is the CP-type G domain; that stretch reads KNEMIRPPVA…VGDTPGFSSL (162 aa). GTP is bound by residues 113–116 and 168–176; these read TKTD and GQTGAGKST. Zn(2+) is bound by residues cysteine 249, cysteine 254, histidine 256, and cysteine 262.

Belongs to the TRAFAC class YlqF/YawG GTPase family. RsgA subfamily. As to quaternary structure, monomer. Associates with 30S ribosomal subunit, binds 16S rRNA. It depends on Zn(2+) as a cofactor.

The protein resides in the cytoplasm. In terms of biological role, one of several proteins that assist in the late maturation steps of the functional core of the 30S ribosomal subunit. Helps release RbfA from mature subunits. May play a role in the assembly of ribosomal proteins into the subunit. Circularly permuted GTPase that catalyzes slow GTP hydrolysis, GTPase activity is stimulated by the 30S ribosomal subunit. This chain is Small ribosomal subunit biogenesis GTPase RsgA, found in Latilactobacillus sakei subsp. sakei (strain 23K) (Lactobacillus sakei subsp. sakei).